A 508-amino-acid polypeptide reads, in one-letter code: Small ribosomal subunit protein uS3m (508 aa).

The protein belongs to the universal ribosomal protein uS3 family. Component of the mitochondrial small ribosomal subunit (mt-SSU). Mature N.crassa 74S mitochondrial ribosomes consist of a small (37S) and a large (54S) subunit. The 37S small subunit contains a 16S ribosomal RNA (16S mt-rRNA) and 32 different proteins. The 54S large subunit contains a 23S rRNA (23S mt-rRNA) and 42 different proteins. uS3m, uS4m and uS5m form the narrow entry site of the mRNA channel.

It is found in the mitochondrion. In terms of biological role, component of the mitochondrial ribosome (mitoribosome), a dedicated translation machinery responsible for the synthesis of mitochondrial genome-encoded proteins, including at least some of the essential transmembrane subunits of the mitochondrial respiratory chain. The mitoribosomes are attached to the mitochondrial inner membrane and translation products are cotranslationally integrated into the membrane. uS3m is essential for mitochondrial protein synthesis and required for the maturation of small ribosomal subunits. The protein is Small ribosomal subunit protein uS3m (var1) of Neurospora crassa (strain ATCC 24698 / 74-OR23-1A / CBS 708.71 / DSM 1257 / FGSC 987).